Reading from the N-terminus, the 425-residue chain is MTPPCLNCSFFPGQLSPNASTGLLSCNDSEFKEHFDLEDLNLTHEDLRLKYLGPQQVKQFLPICVTYLLIFVVGTLGNGLTCTVILRQKAMHTPTNFYLFSLAVSDLLVLLVGLPLELYEMQHNYPFQLGAGGCYFRILLLETVCLASVLNVTALSVERYVAVVHPLQAKSVMTRTHVRRMLGAIWVFAILFSLPNTSLHGLSPLYVPCRGPVPDSVTCTLVRPQFFYKLVIQTTILLFFCLPMVTISVLYLLIGLRLRRERILLQEEVKGRISAAARQASHRSIQLRDRERRQVTKMLIALVIVFGTCWVPFHADRLMWSMVSHWTDGLRLAFQSVHLASGVFLYLGSAANPVLYNLMSTRFRESFRETLGLGTRCCHRHQPRHDSHSHLRLTTVSTLCDRNSRDVPLAENRDPGCEQETDPPE.

The Extracellular segment spans residues 1-59 (MTPPCLNCSFFPGQLSPNASTGLLSCNDSEFKEHFDLEDLNLTHEDLRLKYLGPQQVKQ). N-linked (GlcNAc...) asparagine glycosylation is present at Asn-41. The helical transmembrane segment at 60 to 80 (FLPICVTYLLIFVVGTLGNGL) threads the bilayer. Over 81–96 (TCTVILRQKAMHTPTN) the chain is Cytoplasmic. Residues 97–117 (FYLFSLAVSDLLVLLVGLPLE) form a helical membrane-spanning segment. Residues 118 to 137 (LYEMQHNYPFQLGAGGCYFR) are Extracellular-facing. Cys-134 and Cys-219 are disulfide-bonded. A helical transmembrane segment spans residues 138-158 (ILLLETVCLASVLNVTALSVE). Residues 159–181 (RYVAVVHPLQAKSVMTRTHVRRM) lie on the Cytoplasmic side of the membrane. A helical membrane pass occupies residues 182 to 202 (LGAIWVFAILFSLPNTSLHGL). The Extracellular segment spans residues 203–235 (SPLYVPCRGPVPDSVTCTLVRPQFFYKLVIQTT). Residues 236 to 256 (ILLFFCLPMVTISVLYLLIGL) traverse the membrane as a helical segment. At 257 to 294 (RLRRERILLQEEVKGRISAAARQASHRSIQLRDRERRQ) the chain is on the cytoplasmic side. A helical transmembrane segment spans residues 295-315 (VTKMLIALVIVFGTCWVPFHA). Residues 316 to 331 (DRLMWSMVSHWTDGLR) are Extracellular-facing. The helical transmembrane segment at 332–352 (LAFQSVHLASGVFLYLGSAAN) threads the bilayer. The Cytoplasmic portion of the chain corresponds to 353–425 (PVLYNLMSTR…GCEQETDPPE (73 aa)). Residues 406–425 (DVPLAENRDPGCEQETDPPE) form a disordered region.

This sequence belongs to the G-protein coupled receptor 1 family. Highly expressed in the small intestine and lung. Low expression in the central nervous system.

It is found in the cell membrane. Functionally, receptor for the neuromedin-U and neuromedin-S neuropeptides. The protein is Neuromedin-U receptor 1 (Nmur1) of Rattus norvegicus (Rat).